The following is a 265-amino-acid chain: Hemin import ATP-binding protein HmuV (265 aa).

The ABC transporter domain maps to 13-249; sequence LKASNLHLQL…TAVENVYGWP (237 aa). Residue 45–52 coordinates ATP; it reads GPNGAGKS.

Belongs to the ABC transporter superfamily. Heme (hemin) importer (TC 3.A.1.14.5) family. The complex is composed of two ATP-binding proteins (HmuV), two transmembrane proteins (HmuU) and a solute-binding protein (HmuT).

It localises to the cell inner membrane. Its function is as follows. Part of the ABC transporter complex HmuTUV involved in hemin import. Responsible for energy coupling to the transport system. The protein is Hemin import ATP-binding protein HmuV of Photobacterium damselae subsp. damselae (Listonella damsela).